The primary structure comprises 327 residues: Beta-ketoacyl-[acyl-carrier-protein] synthase III (327 aa).

Catalysis depends on residues cysteine 114 and histidine 254. Residues 255–259 (QANRR) are ACP-binding. Asparagine 284 is an active-site residue.

The protein belongs to the thiolase-like superfamily. FabH family. In terms of assembly, homodimer.

The protein localises to the cytoplasm. It carries out the reaction malonyl-[ACP] + acetyl-CoA + H(+) = 3-oxobutanoyl-[ACP] + CO2 + CoA. It participates in lipid metabolism; fatty acid biosynthesis. In terms of biological role, catalyzes the condensation reaction of fatty acid synthesis by the addition to an acyl acceptor of two carbons from malonyl-ACP. Catalyzes the first condensation reaction which initiates fatty acid synthesis and may therefore play a role in governing the total rate of fatty acid production. Possesses both acetoacetyl-ACP synthase and acetyl transacylase activities. Its substrate specificity determines the biosynthesis of branched-chain and/or straight-chain of fatty acids. The sequence is that of Beta-ketoacyl-[acyl-carrier-protein] synthase III from Lactobacillus helveticus (strain DPC 4571).